The chain runs to 702 residues: Elongation factor G 2 (702 aa).

In terms of domain architecture, tr-type G spans 8 to 290 (ERYRNIGISA…AVIDYLPSPV (283 aa)). Residues 17-24 (AHIDAGKT), 88-92 (DTPGH), and 142-145 (NKMD) each bind GTP.

Belongs to the TRAFAC class translation factor GTPase superfamily. Classic translation factor GTPase family. EF-G/EF-2 subfamily.

The protein resides in the cytoplasm. In terms of biological role, catalyzes the GTP-dependent ribosomal translocation step during translation elongation. During this step, the ribosome changes from the pre-translocational (PRE) to the post-translocational (POST) state as the newly formed A-site-bound peptidyl-tRNA and P-site-bound deacylated tRNA move to the P and E sites, respectively. Catalyzes the coordinated movement of the two tRNA molecules, the mRNA and conformational changes in the ribosome. This is Elongation factor G 2 from Cupriavidus metallidurans (strain ATCC 43123 / DSM 2839 / NBRC 102507 / CH34) (Ralstonia metallidurans).